The sequence spans 504 residues: Potassium voltage-gated channel subfamily V member 1 (504 aa).

2 disordered regions span residues 1-22 (MDLS…GGSL) and 172-193 (KKDT…QGPC). At 1 to 214 (MDLSPRNRPL…EKPGSSTAAR (214 aa)) the chain is on the cytoplasmic side. Over residues 10 to 22 (LLESSSLDSGGSL) the composition is skewed to low complexity. Residues 172-185 (KKDTDDQESQHESE) are compositionally biased toward basic and acidic residues. The chain crosses the membrane as a helical span at residues 215–235 (IFGVISIIFVAVSIVNMALMS). The Extracellular segment spans residues 236-242 (AELSWLN). A helical transmembrane segment spans residues 243–263 (LQLLEILEYVCISWFTGEFIL). Over 264 to 280 (RFLCVKDRCRFLRKVPN) the chain is Cytoplasmic. Residues 281-301 (IIDLLAILPFYITLLVESLSG) traverse the membrane as a helical segment. Topologically, residues 302–313 (SHTTQELENVGR) are extracellular. The helical; Voltage-sensor transmembrane segment at 314–335 (LVQVLRLLRALRMLKLGRHSTG) threads the bilayer. Topologically, residues 336-349 (LRSLGMTITQCYEE) are cytoplasmic. Residues 350–370 (VGLLLLFLSVGISIFSTIEYF) traverse the membrane as a helical segment. The Selectivity filter signature appears at 396 to 401 (TVGYGD). Residues 411-431 (IVAFMCILSGILVLALPIAII) traverse the membrane as a helical segment. The Cytoplasmic portion of the chain corresponds to 432-504 (NDRFSACYFT…RSSGGDDFWF (73 aa)).

Belongs to the potassium channel family. V (TC 1.A.1.2) subfamily. Kv8.1/KCNV1 sub-subfamily. In terms of assembly, heteromultimer with KCNB1 and KCNB2. Interacts with KCNC4 and KCND1. In terms of tissue distribution, detected in brain, throughout layers II, IV and VI of the brain cortex. Detected in cerebellum and hippocampus, in the granule cell layer, Purkinje cell layer, pyramidal cell layer and dentate gyrus. Detected at lower levels in olfactory bulb, amygdala, thalamus, hypothalamus, midbrain and brainstem.

The protein resides in the cell membrane. Potassium channel subunit that does not form functional channels by itself. Modulates KCNB1 and KCNB2 channel activity by shifting the threshold for inactivation to more negative values and by slowing the rate of inactivation. Can down-regulate the channel activity of KCNB1, KCNB2, KCNC4 and KCND1, possibly by trapping them in intracellular membranes. In Mesocricetus auratus (Golden hamster), this protein is Potassium voltage-gated channel subfamily V member 1 (KCNV1).